The sequence spans 166 residues: Ribosome-binding factor A (166 aa).

Residues 122–166 form a disordered region; it reads LASTAEHAGDADPYRVDTEDDDDDTDGADAEARSDADVRRGPQSG. Basic and acidic residues predominate over residues 128–138; sequence HAGDADPYRVD. A compositionally biased stretch (acidic residues) spans 139 to 150; that stretch reads TEDDDDDTDGAD. The span at 151–166 shows a compositional bias: basic and acidic residues; sequence AEARSDADVRRGPQSG.

It belongs to the RbfA family. In terms of assembly, monomer. Binds 30S ribosomal subunits, but not 50S ribosomal subunits or 70S ribosomes.

It is found in the cytoplasm. One of several proteins that assist in the late maturation steps of the functional core of the 30S ribosomal subunit. Associates with free 30S ribosomal subunits (but not with 30S subunits that are part of 70S ribosomes or polysomes). Required for efficient processing of 16S rRNA. May interact with the 5'-terminal helix region of 16S rRNA. This Saccharopolyspora erythraea (strain ATCC 11635 / DSM 40517 / JCM 4748 / NBRC 13426 / NCIMB 8594 / NRRL 2338) protein is Ribosome-binding factor A.